Consider the following 220-residue polypeptide: 5-hmdU DNA kinase 1 (220 aa).

It belongs to the thymidylate kinase family. 5-hmdU DNA kinase subfamily.

The enzyme catalyses 5-hydroxymethyl-dUMP in DNA + ATP = 5-phosphomethyl-dUMP in DNA + ADP + H(+). Its function is as follows. Phosphorylates 5-hydroxymethyluracil (5hmdU) into 5-phosphomethyl-2'-deoxyuridine (5- PmdU) on DNA as a step in the pathway leading to thymidine hypermodifications in the viral genome. The phosphate is added internally to the DNA polymer. As a final result of the pathway of hypermodification, 5-aminoethoxy-2'-deoxymethyluridine (5-NeOmdU) substitutes for about 40% of the thymidines in the viral DNA. These modifications probably prevent degradation of viral genome by the host restriction-modification antiviral defense system. The protein is 5-hmdU DNA kinase 1 of Salmonella phage ViI.